The sequence spans 304 residues: Protease HtpX homolog (304 aa).

2 helical membrane passes run Val14–Ile34 and Tyr39–Met59. Residue His144 coordinates Zn(2+). The active site involves Glu145. His148 is a binding site for Zn(2+). The next 2 helical transmembrane spans lie at Ile159–Phe179 and Ile202–Ile222. Residue Glu231 participates in Zn(2+) binding. Positions Ser275–Met304 are disordered.

The protein belongs to the peptidase M48B family. Zn(2+) serves as cofactor.

The protein localises to the cell membrane. In Listeria innocua serovar 6a (strain ATCC BAA-680 / CLIP 11262), this protein is Protease HtpX homolog.